The chain runs to 248 residues: Probable transcriptional regulatory protein MCA1220 (248 aa).

It belongs to the TACO1 family.

It is found in the cytoplasm. In Methylococcus capsulatus (strain ATCC 33009 / NCIMB 11132 / Bath), this protein is Probable transcriptional regulatory protein MCA1220.